The sequence spans 168 residues: Myelin basic protein (168 aa).

An N-acetylalanine modification is found at A1. Phosphoserine occurs at positions 7 and 12. Residue Y14 is modified to Phosphotyrosine. T17 is subject to Phosphothreonine. Residue S19 is modified to Phosphoserine. At T20 the chain carries Phosphothreonine. R25 and R31 each carry citrulline. A Phosphothreonine modification is found at T35. Residue S40 is modified to Phosphoserine. The interval 42 to 84 is disordered; the sequence is GRFFSSDRGAPKRGSGKDHAARTTHYGSLPQKSGHRPQDENPV. R43 and R49 each carry omega-N-methylarginine. Residues 45–86 are induces experimental autoimmune encephalomyelitis (EAE); it reads FSSDRGAPKRGSGKDHAARTTHYGSLPQKSGHRPQDENPVVH. S56 carries the post-translational modification Phosphoserine. T65 is modified (phosphothreonine). At Y67 the chain carries Phosphotyrosine. Phosphoserine is present on S74. A phosphothreonine mark is found at T93 and T96. Position 101 is a deamidated glutamine; partial (Q101). At R105 the chain carries Omega-N-methylarginine; alternate. Symmetric dimethylarginine; alternate is present on R105. Phosphoserine is present on S113. The residue at position 120 (K120) is an N6-acetyllysine. At R128 the chain carries Citrulline. Q145 carries the post-translational modification Deamidated glutamine. R157 bears the Citrulline mark. S159 is modified (phosphoserine). Phosphoserine; by UHMK1 is present on S163. Citrulline is present on R168.

It belongs to the myelin basic protein family. In terms of assembly, homodimer. As in other animals, several charge isomers may be produced as a result of optional post-translational modifications, such as phosphorylation of serine or threonine residues, deamidation of glutamine or asparagine residues, citrullination and methylation of arginine residues. In terms of processing, phosphorylated by TAOK2, VRK2, MAPK11, MAPK12, MAPK14 and MINK1. Post-translationally, proteolytically cleaved in B cell lysosomes by cathepsin CTSG which degrades the major immunogenic MBP epitope and prevents the activation of MBP-specific autoreactive T cells. As to expression, found in both the central and the peripheral nervous system.

It is found in the myelin membrane. Is, with PLP, the most abundant protein component of the myelin membrane in the CNS. Has a role in both the formation and stabilization of this compact multilayer arrangement of bilayers. Each splice variant and charge isomer may have a specialized function in the assembly of an optimized, biochemically functional myelin membrane. In Oryctolagus cuniculus (Rabbit), this protein is Myelin basic protein (MBP).